Consider the following 268-residue polypeptide: 4-hydroxy-tetrahydrodipicolinate reductase (268 aa).

NAD(+)-binding positions include G10–M15, D36, G99–T101, and A123–M126. H156 (proton donor/acceptor) is an active-site residue. Position 157 (H157) interacts with (S)-2,3,4,5-tetrahydrodipicolinate. Catalysis depends on K160, which acts as the Proton donor. G166–T167 is a binding site for (S)-2,3,4,5-tetrahydrodipicolinate.

It belongs to the DapB family.

It is found in the cytoplasm. It carries out the reaction (S)-2,3,4,5-tetrahydrodipicolinate + NAD(+) + H2O = (2S,4S)-4-hydroxy-2,3,4,5-tetrahydrodipicolinate + NADH + H(+). The catalysed reaction is (S)-2,3,4,5-tetrahydrodipicolinate + NADP(+) + H2O = (2S,4S)-4-hydroxy-2,3,4,5-tetrahydrodipicolinate + NADPH + H(+). It participates in amino-acid biosynthesis; L-lysine biosynthesis via DAP pathway; (S)-tetrahydrodipicolinate from L-aspartate: step 4/4. Catalyzes the conversion of 4-hydroxy-tetrahydrodipicolinate (HTPA) to tetrahydrodipicolinate. This Herminiimonas arsenicoxydans protein is 4-hydroxy-tetrahydrodipicolinate reductase.